The primary structure comprises 323 residues: o-succinylbenzoate synthase (323 aa).

Lys-134 (proton donor) is an active-site residue. Mg(2+) contacts are provided by Asp-162, Glu-191, and Asp-214. Lys-236 functions as the Proton acceptor in the catalytic mechanism.

The protein belongs to the mandelate racemase/muconate lactonizing enzyme family. MenC type 1 subfamily. The cofactor is a divalent metal cation.

The catalysed reaction is (1R,6R)-6-hydroxy-2-succinyl-cyclohexa-2,4-diene-1-carboxylate = 2-succinylbenzoate + H2O. The protein operates within quinol/quinone metabolism; 1,4-dihydroxy-2-naphthoate biosynthesis; 1,4-dihydroxy-2-naphthoate from chorismate: step 4/7. It functions in the pathway quinol/quinone metabolism; menaquinone biosynthesis. In terms of biological role, converts 2-succinyl-6-hydroxy-2,4-cyclohexadiene-1-carboxylate (SHCHC) to 2-succinylbenzoate (OSB). This chain is o-succinylbenzoate synthase, found in Edwardsiella ictaluri (strain 93-146).